The primary structure comprises 325 residues: L-lactate dehydrogenase (325 aa).

Residues valine 21, aspartate 42, lysine 47, tyrosine 73, and 87–88 contribute to the NAD(+) site; that span reads GA. Residues glutamine 90, arginine 96, and 128–131 contribute to the substrate site; that span reads NPVD. Residues 126 to 128 and serine 151 contribute to the NAD(+) site; that span reads ATN. 156-159 serves as a coordination point for substrate; sequence DTAR. Arginine 161 and histidine 176 together coordinate beta-D-fructose 1,6-bisphosphate. Catalysis depends on histidine 183, which acts as the Proton acceptor. The residue at position 228 (tyrosine 228) is a Phosphotyrosine. Residue threonine 237 coordinates substrate.

This sequence belongs to the LDH/MDH superfamily. LDH family. As to quaternary structure, homotetramer.

Its subcellular location is the cytoplasm. It catalyses the reaction (S)-lactate + NAD(+) = pyruvate + NADH + H(+). It participates in fermentation; pyruvate fermentation to lactate; (S)-lactate from pyruvate: step 1/1. Its activity is regulated as follows. Allosterically activated by fructose 1,6-bisphosphate (FBP). In terms of biological role, catalyzes the conversion of lactate to pyruvate. The sequence is that of L-lactate dehydrogenase from Shouchella clausii (strain KSM-K16) (Alkalihalobacillus clausii).